A 502-amino-acid polypeptide reads, in one-letter code: CBL-interacting serine/threonine-protein kinase 13 (502 aa).

The disordered stretch occupies residues 32-51 (TNKETSTPESPRSPRTPQGS). The span at 35-48 (ETSTPESPRSPRTP) shows a compositional bias: low complexity. A Protein kinase domain is found at 57 to 311 (YEIGKLLGHG…IPEIMKHRWF (255 aa)). Residues 63 to 71 (LGHGSFAKV) and K86 contribute to the ATP site. The Proton acceptor role is filled by D179. Positions 197 to 226 (DFGLSVVSEQLKQEGICQTFCGTPAYLAPE) are activation loop. At S201 the chain carries Phosphoserine. At T215 the chain carries Phosphothreonine. The tract at residues 331 to 359 (DDDNDDDDSSSLSSGRSSTASEGDAEFDI) is disordered. The segment covering 340–352 (SSLSSGRSSTASE) has biased composition (low complexity). One can recognise an NAF domain in the interval 366–387 (PRPASLNAFDILSFSDLSGLFE). The interval 390 to 419 (GQGARFVSAAPMTKIISKLEEIAKEVKFMV) is PPI.

This sequence belongs to the protein kinase superfamily. CAMK Ser/Thr protein kinase family. SNF1 subfamily. Interacts with CBL2 and CBL3. The cofactor is Mn(2+).

It carries out the reaction L-seryl-[protein] + ATP = O-phospho-L-seryl-[protein] + ADP + H(+). The catalysed reaction is L-threonyl-[protein] + ATP = O-phospho-L-threonyl-[protein] + ADP + H(+). CIPK serine-threonine protein kinases interact with CBL proteins. Binding of a CBL protein to the regulatory NAF domain of CIPK protein lead to the activation of the kinase in a calcium-dependent manner. This is CBL-interacting serine/threonine-protein kinase 13 (CIPK13) from Arabidopsis thaliana (Mouse-ear cress).